Reading from the N-terminus, the 259-residue chain is Hydroxyacylglutathione hydrolase (259 aa).

Zn(2+) is bound by residues H56, H58, D60, H61, H112, D133, and H171.

This sequence belongs to the metallo-beta-lactamase superfamily. Glyoxalase II family. Monomer. The cofactor is Zn(2+).

The enzyme catalyses an S-(2-hydroxyacyl)glutathione + H2O = a 2-hydroxy carboxylate + glutathione + H(+). It participates in secondary metabolite metabolism; methylglyoxal degradation; (R)-lactate from methylglyoxal: step 2/2. Its function is as follows. Thiolesterase that catalyzes the hydrolysis of S-D-lactoyl-glutathione to form glutathione and D-lactic acid. The chain is Hydroxyacylglutathione hydrolase from Pseudomonas putida (strain ATCC 700007 / DSM 6899 / JCM 31910 / BCRC 17059 / LMG 24140 / F1).